We begin with the raw amino-acid sequence, 100 residues long: Small ribosomal subunit protein bS21 (100 aa).

The segment covering 37–52 (EKPSEKKAREKAEAVR) has biased composition (basic and acidic residues). Residues 37-100 (EKPSEKKARE…GAGAGPRGPR (64 aa)) form a disordered region. Residues 53-62 (RARKLARKKL) are compositionally biased toward basic residues. Gly residues predominate over residues 84-100 (GAAGAGAGAGAGPRGPR).

This sequence belongs to the bacterial ribosomal protein bS21 family.

In Rhodopseudomonas palustris (strain BisB5), this protein is Small ribosomal subunit protein bS21.